The chain runs to 345 residues: Ephrin-B1 (345 aa).

The first 24 residues, 1 to 24 (MARPGQRWLSKWLVAMVVLTLCRL), serve as a signal peptide directing secretion. Topologically, residues 25-236 (ATPLAKNLEP…GDSDSFFNSK (212 aa)) are extracellular. The region spanning 30 to 164 (KNLEPVSWSS…TRTMKIVMKV (135 aa)) is the Ephrin RBD domain. Cystine bridges form between Cys-64–Cys-101 and Cys-89–Cys-153. An N-linked (GlcNAc...) asparagine glycan is attached at Asn-139. Residues 169–227 (NAVTPEQLTTSRPSKESDNTVKTATQAPGRGSQGDSDGKHETVNQEEKSGPGAGGGGSG) are disordered. The segment covering 204-217 (SDGKHETVNQEEKS) has biased composition (basic and acidic residues). Residues 237-257 (VALFAAVGAGCVIFLLIIIFL) form a helical membrane-spanning segment. Over 258-345 (TVLLLKLRKR…QSPANIYYKV (88 aa)) the chain is Cytoplasmic. The short motif at 259–272 (VLLLKLRKRHRKHT) is the Nuclear localization signal element. The interaction with ZHX2 stretch occupies residues 262-293 (LKLRKRHRKHTQQRAAALSLSTLASPKGGSGT). Ser-280 and Ser-286 each carry phosphoserine. Positions 343–345 (YKV) match the PDZ-binding motif.

The protein belongs to the ephrin family. In terms of assembly, interacts (via PDZ-binding motif) with GRIP1 and GRIP2 (via PDZ domain 6). Interacts with TLE1. The intracellular domain peptide interacts with ZHX2; the interaction enhances ZHX2 transcriptional repression activity. Inducible phosphorylation of tyrosine residues in the cytoplasmic domain. In terms of processing, proteolytically processed. The ectodomain is cleaved, probably by a metalloprotease, to produce a membrane-tethered C-terminal fragment. This fragment is then further processed by the gamma-secretase complex to yield a soluble intracellular domain peptide which can translocate to the nucleus. The intracellular domain peptide is highly labile suggesting that it is targeted for degradation by the proteasome. Expressed on lateral floor plate cells, specifically on commissural axon segments that have passed through the floor plate. Expressed in cells of the retinal ganglion cell layer during retinal axon guidance to the optic disk. Expressed in myogenic progenitor cells.

It localises to the cell membrane. Its subcellular location is the membrane raft. The protein localises to the nucleus. Cell surface transmembrane ligand for Eph receptors, a family of receptor tyrosine kinases which are crucial for migration, repulsion and adhesion during neuronal, vascular and epithelial development. Binding to Eph receptors residing on adjacent cells leads to contact-dependent bidirectional signaling into neighboring cells. Shows high affinity for the receptor tyrosine kinase EPHB1/ELK. Can also bind EPHB2 and EPHB3. Binds to, and induces the collapse of, commissural axons/growth cones in vitro. May play a role in constraining the orientation of longitudinally projecting axons. The protein is Ephrin-B1 (Efnb1) of Mus musculus (Mouse).